Consider the following 288-residue polypeptide: Glucose-1-phosphate thymidylyltransferase (288 aa).

Mg(2+)-binding residues include Asp108 and Asp223.

The protein belongs to the glucose-1-phosphate thymidylyltransferase family. Homotetramer. Mg(2+) serves as cofactor.

The enzyme catalyses dTTP + alpha-D-glucose 1-phosphate + H(+) = dTDP-alpha-D-glucose + diphosphate. In terms of biological role, catalyzes the formation of dTDP-glucose, from dTTP and glucose 1-phosphate, as well as its pyrophosphorolysis. In Neisseria meningitidis serogroup A / serotype 4A (strain DSM 15465 / Z2491), this protein is Glucose-1-phosphate thymidylyltransferase (rmlA1).